A 306-amino-acid chain; its full sequence is Ribonuclease H2 subunit B (306 aa).

Residues 232–285 are disordered; the sequence is LPDLSSPTPEPPVKKRKVSEAPVEAEEDYTKFNSDSKNKKSNSKMTAAQKSLAK. Basic and acidic residues predominate over residues 259 to 269; it reads DYTKFNSDSKN.

This sequence belongs to the RNase H2 subunit B family. In terms of assembly, the RNase H2 complex is a heterotrimer composed of the catalytic subunit rnaseh2a and the non-catalytic subunits rnaseh2b and rnaseh2c.

Its subcellular location is the nucleus. Non catalytic subunit of RNase H2, an endonuclease that specifically degrades the RNA of RNA:DNA hybrids. Participates in DNA replication, possibly by mediating the removal of lagging-strand Okazaki fragment RNA primers during DNA replication. Mediates the excision of single ribonucleotides from DNA:RNA duplexes. The sequence is that of Ribonuclease H2 subunit B (rnaseh2b) from Xenopus tropicalis (Western clawed frog).